The sequence spans 381 residues: MSQFFEAATPVAIPTNNTNGGSSDAGSAATGGAPVVGTTAQPTINHRLLLSLKEAAKIIGTKGSTISRIRAANSVKIGISEKVPGCSDRILSCAGNVINVANAIGDIVDVLNKRNPENEDAAEGEAEEHYYFHFLNHILPAPSKDEIRDLQQLEDIGYVRLIVANSHISSIIGKAGATIKSLINKHGVKIVASKDFLPASDERIIEIQGFPGSITNVLIEISEIILSDVDVRFSTERSYFPHLKKSSGEPTSPSTSSNTRIELKIPELYVGAIIGRGMNRIKNLKTFTKTNIVVERKDDDDKDENFRKFIITSKFPKNVKLAESMLLKNLNTEIEKRENYKRKLEAAEVDATVVTERSDSASFLEEKEEPQKNHDNKEEQS.

A disordered region spans residues Met1–Pro34. Residues Thr15 to Ala33 show a composition bias toward low complexity. KH domains lie at Thr43–Ile107, Ile156–Ile221, and Asn258–Leu326. The tract at residues Arg357–Ser381 is disordered. Residues Ser358, Ser360, and Ser362 each carry the phosphoserine modification. The span at Glu369–Ser381 shows a compositional bias: basic and acidic residues.

The protein belongs to the HEK2 family. Binds RNA. In terms of processing, phosphorylated by the plasma membrane-Anchored casein kinase YCK1. Phosphorylation at its C-terminus reduces its RNA-binding capacity.

The protein localises to the cytoplasm. It is found in the P-body. Its subcellular location is the nucleus. It localises to the chromosome. The protein resides in the telomere. Functionally, RNA-binding protein involved in the correct localization of transcripts in the cell. RNA localization is a widespread mechanism for achieving localized protein synthesis. Required for the asymmetric localization to the daughter cell nucleus of the ASH1 transcript, coding for a specific repressor of transcription. Overexpression inhibits translation of the ASH1 transcript. Involved in the stability of transcripts, like the MTL1 mRNA. Involved in structural and functional organization of telomeric chromatin and regulates silencing at the HMR locus. The protein is Heterogeneous nuclear rnp K-like protein 2 (HEK2) of Saccharomyces cerevisiae (strain RM11-1a) (Baker's yeast).